Consider the following 214-residue polypeptide: Ras-related protein RABA2b (214 aa).

A GTP-binding site is contributed by 19–26 (GDSGVGKS). Positions 41–49 (SKSTIGVEF) match the Effector region motif. Residues 67–71 (DTAGQ), 125–128 (NKSD), and 155–156 (SA) contribute to the GTP site. 2 S-geranylgeranyl cysteine lipidation sites follow: Cys211 and Cys212.

This sequence belongs to the small GTPase superfamily. Rab family. Expressed in root tips.

The protein localises to the endosome membrane. The protein resides in the golgi apparatus. It localises to the trans-Golgi network membrane. Functionally, intracellular vesicle trafficking and protein transport. This chain is Ras-related protein RABA2b (RABA2B), found in Arabidopsis thaliana (Mouse-ear cress).